Reading from the N-terminus, the 123-residue chain is Protein LLP homolog (123 aa).

Residues 1–21 (MAKSLRSKWKRKMRAEKRKKN) are compositionally biased toward basic residues. Disordered regions lie at residues 1–22 (MAKS…KKNA) and 61–123 (DLDV…KLAW). Positions 70–89 (ESSKMDTELKRNKKNLRDQH) are enriched in basic and acidic residues. Positions 100–123 (QQKKLKSQCGKKKGKSKQAKKLAW) are enriched in basic residues.

This sequence belongs to the learning-associated protein family.

It localises to the nucleus. It is found in the nucleolus. The protein resides in the chromosome. Its function is as follows. Regulates dendritic and spine growth and synaptic transmission. This is Protein LLP homolog (llph) from Xenopus laevis (African clawed frog).